The following is a 751-amino-acid chain: ATP-dependent DNA helicase Hel308 (751 aa).

Residues Q20 and 39 to 46 (IPTASGKT) contribute to the ATP site. The 171-residue stretch at 26–196 (EGLLDKSKNF…WLNAKLVTDE (171 aa)) folds into the Helicase ATP-binding domain. The DEAH box signature appears at 143–146 (DEIH). One can recognise a Helicase C-terminal domain in the interval 235–435 (NLTDLIVDSV…VLRVHILGLI (201 aa)).

Belongs to the helicase family. Hel308 subfamily. As to quaternary structure, monomer.

The enzyme catalyses Couples ATP hydrolysis with the unwinding of duplex DNA by translocating in the 3'-5' direction.. It catalyses the reaction ATP + H2O = ADP + phosphate + H(+). Functionally, DNA-dependent ATPase and 3'-5' DNA helicase that may be involved in repair of stalled replication forks. In Methanococcus vannielii (strain ATCC 35089 / DSM 1224 / JCM 13029 / OCM 148 / SB), this protein is ATP-dependent DNA helicase Hel308.